A 436-amino-acid polypeptide reads, in one-letter code: MHYLIVSYSHKNTDIATRERLAFDNGVRSESFLRELVANKFINEGILLSTCNRVEFILSVKEAHKAGDFLMEKLSEYSKIPKEELSERADVYEDTGAIHHLFCVCSSLDSLVVGETQIAGQLKSAFKFAYDGGFCSQKLSRAMHFAFKCAASVRNCTEISKNPVSVASASVSKAKDILGDLGGDTAIVVGLGEMSQLTIKHLTALGCNVILVNRDKAKAEAFAKEFGGMVSVEGFPRLGELLNHHKMLFSATGAPHTVISKDMVEPKSFRRYWFDLAVPRDIEAFESETIRIFAVDDLQEIVNKNLSLREEQAKRAYGIIGRFTQEFYKWLQSLSVDPIIKAMREQAKEAALKEITKAISKGYLPKECEKSVEKIIHNSFNTFLHHPTIKLKEISEEPQSDTVVEAVKLLFGIQEDGLMLDRYKCEYDTTSKEREE.

Substrate contacts are provided by residues 50 to 53, S110, 115 to 117, and Q121; these read TCNR and ETQ. C51 functions as the Nucleophile in the catalytic mechanism. NADP(+) is bound at residue 190 to 195; it reads GLGEMS.

The protein belongs to the glutamyl-tRNA reductase family. In terms of assembly, homodimer.

The catalysed reaction is (S)-4-amino-5-oxopentanoate + tRNA(Glu) + NADP(+) = L-glutamyl-tRNA(Glu) + NADPH + H(+). It functions in the pathway porphyrin-containing compound metabolism; protoporphyrin-IX biosynthesis; 5-aminolevulinate from L-glutamyl-tRNA(Glu): step 1/2. Functionally, catalyzes the NADPH-dependent reduction of glutamyl-tRNA(Glu) to glutamate 1-semialdehyde (GSA). The protein is Glutamyl-tRNA reductase of Wolinella succinogenes (strain ATCC 29543 / DSM 1740 / CCUG 13145 / JCM 31913 / LMG 7466 / NCTC 11488 / FDC 602W) (Vibrio succinogenes).